The primary structure comprises 360 residues: Melanoma-associated antigen B16 (360 aa).

Positions 1–118 (MSQKNPEYAA…GNSVIPPDQP (118 aa)) are disordered. Residues 9–19 (AADHDHTREEM) show a composition bias toward basic and acidic residues. Residues 63 to 98 (CSSSQLLTASNQEDPAYETPSTSRGLQHPYVSSSES) show a composition bias toward polar residues. The MAGE domain occupies 125–324 (IDGKVNFLVN…TVFPSQYEEA (200 aa)). Residues 340-360 (AGPSSASGESSSDMGSNVPHI) are disordered. A compositionally biased stretch (low complexity) spans 341–360 (GPSSASGESSSDMGSNVPHI).

The sequence is that of Melanoma-associated antigen B16 (Mageb16) from Rattus norvegicus (Rat).